The sequence spans 80 residues: CLAVATA3/ESR (CLE)-related protein 4 (80 aa).

The first 22 residues, 1–22 (MASFKLWVCLILLLLEFSVHQC), serve as a signal peptide directing secretion. Residues 55-80 (SKDGQTVLGTLDSKRLSPGGPDPRHH) form a disordered region. 2 positions are modified to hydroxyproline: proline 72 and proline 75. Proline 75 carries O-linked (Ara...) hydroxyproline glycosylation.

It belongs to the CLV3/ESR signal peptide family. The O-glycosylation (arabinosylation) of the hydroxyproline Pro-75 enhances binding affinity of the CLE4p peptide for its receptor. As to expression, expressed in roots and seedlings.

The protein resides in the secreted. It localises to the extracellular space. Extracellular signal peptide that regulates cell fate. The sequence is that of CLAVATA3/ESR (CLE)-related protein 4 from Arabidopsis thaliana (Mouse-ear cress).